The primary structure comprises 503 residues: Aromatase (503 aa).

A run of 3 helical transmembrane segments spans residues 19–39 (EVAPVASIAILLLTGFLLLVW), 51–71 (GYFLGIGPLISHCRFLWMGIG), and 303–323 (MLIAAPDTMSVSVFFMLFLIA). Substrate is bound by residues Asp-309 and Met-374. Cys-437 serves as a coordination point for heme.

Belongs to the cytochrome P450 family. Heme is required as a cofactor.

The protein localises to the endoplasmic reticulum membrane. Its subcellular location is the microsome membrane. The enzyme catalyses testosterone + 3 reduced [NADPH--hemoprotein reductase] + 3 O2 = 17beta-estradiol + formate + 3 oxidized [NADPH--hemoprotein reductase] + 4 H2O + 4 H(+). The catalysed reaction is androst-4-ene-3,17-dione + 3 reduced [NADPH--hemoprotein reductase] + 3 O2 = estrone + formate + 3 oxidized [NADPH--hemoprotein reductase] + 4 H2O + 4 H(+). It carries out the reaction androst-4-ene-3,17-dione + reduced [NADPH--hemoprotein reductase] + O2 = 19-hydroxyandrost-4-ene-3,17-dione + oxidized [NADPH--hemoprotein reductase] + H2O + H(+). It catalyses the reaction 19-hydroxyandrost-4-ene-3,17-dione + reduced [NADPH--hemoprotein reductase] + O2 = 19-oxo-androst-4-ene-3,17-dione + oxidized [NADPH--hemoprotein reductase] + 2 H2O + H(+). The enzyme catalyses 19-oxo-androst-4-ene-3,17-dione + reduced [NADPH--hemoprotein reductase] + O2 = estrone + formate + oxidized [NADPH--hemoprotein reductase] + H2O + 2 H(+). The catalysed reaction is estrone + reduced [NADPH--hemoprotein reductase] + O2 = 2-hydroxyestrone + oxidized [NADPH--hemoprotein reductase] + H2O + H(+). It carries out the reaction 17beta-hydroxy-5alpha-androstan-3-one + reduced [NADPH--hemoprotein reductase] + O2 = 17beta,19-dihydroxy-3-oxo-5alpha-androstanone + oxidized [NADPH--hemoprotein reductase] + H2O + H(+). It catalyses the reaction 17beta,19-dihydroxy-3-oxo-5alpha-androstanone + reduced [NADPH--hemoprotein reductase] + O2 = 17beta-hydroxy-3,19-dioxo-5alpha-androstanone + oxidized [NADPH--hemoprotein reductase] + 2 H2O + H(+). The enzyme catalyses 17beta-hydroxy-3,19-dioxo-5alpha-androstanone + reduced [NADPH--hemoprotein reductase] + O2 = 17beta-hydroxy-3-oxo-19-nor-5alpha-androst-1-ene + formate + oxidized [NADPH--hemoprotein reductase] + H2O + 2 H(+). Its pathway is steroid hormone biosynthesis. A cytochrome P450 monooxygenase that catalyzes the conversion of C19 androgens, androst-4-ene-3,17-dione (androstenedione) and testosterone to the C18 estrogens, estrone and estradiol, respectively. Catalyzes three successive oxidations of C19 androgens: two conventional oxidations at C19 yielding 19-hydroxy and 19-oxo/19-aldehyde derivatives, followed by a third oxidative aromatization step that involves C1-beta hydrogen abstraction combined with cleavage of the C10-C19 bond to yield a phenolic A ring and formic acid. Alternatively, the third oxidative reaction yields a 19-norsteroid and formic acid. Converts dihydrotestosterone to delta1,10-dehydro 19-nordihydrotestosterone and may play a role in homeostasis of this potent androgen. Also displays 2-hydroxylase activity toward estrone. Mechanistically, uses molecular oxygen inserting one oxygen atom into a substrate, and reducing the second into a water molecule, with two electrons provided by NADPH via cytochrome P450 reductase (CPR; NADPH-ferrihemoprotein reductase). The sequence is that of Aromatase (CYP19A1) from Leucopleurus acutus (Atlantic white-sided dolphin).